The sequence spans 293 residues: 4-hydroxy-tetrahydrodipicolinate synthase (293 aa).

T46 contacts pyruvate. Y133 functions as the Proton donor/acceptor in the catalytic mechanism. K161 acts as the Schiff-base intermediate with substrate in catalysis. Residue V202 participates in pyruvate binding.

The protein belongs to the DapA family. In terms of assembly, homotetramer; dimer of dimers.

The protein localises to the cytoplasm. It catalyses the reaction L-aspartate 4-semialdehyde + pyruvate = (2S,4S)-4-hydroxy-2,3,4,5-tetrahydrodipicolinate + H2O + H(+). It functions in the pathway amino-acid biosynthesis; L-lysine biosynthesis via DAP pathway; (S)-tetrahydrodipicolinate from L-aspartate: step 3/4. Its function is as follows. Catalyzes the condensation of (S)-aspartate-beta-semialdehyde [(S)-ASA] and pyruvate to 4-hydroxy-tetrahydrodipicolinate (HTPA). This Wolbachia pipientis wMel protein is 4-hydroxy-tetrahydrodipicolinate synthase.